Consider the following 152-residue polypeptide: MGARGPGPGATARRRLLALLLLLLLLPLPARAWYKHTASPRYHTVGRAAGLLMGLRRSPYMWRRALRPAAGPLAWDTFGQDVPPRGPSARNALSPGPAPRDAPLLPPGVQTLWQVRRGSFRSGIPVSAPRSPRARGSEPQPELGASSWTSAE.

The N-terminal stretch at Met-1–Ala-32 is a signal peptide. Residues Ala-65–Glu-152 constitute a propeptide that is removed on maturation. 2 disordered regions span residues Gly-79–Gly-108 and Ser-122–Glu-152. The span at Gly-96–Pro-106 shows a compositional bias: pro residues.

The protein belongs to the neuropeptide B/W family.

The protein localises to the secreted. Its function is as follows. Plays a regulatory role in the organization of neuroendocrine signals accessing the anterior pituitary gland. Stimulates water drinking and food intake. May play a role in the hypothalamic response to stress. The chain is Neuropeptide W (NPW) from Sus scrofa (Pig).